A 268-amino-acid chain; its full sequence is Phosphatidylglycerol--prolipoprotein diacylglyceryl transferase (268 aa).

4 helical membrane-spanning segments follow: residues L14–W34, L57–Y77, F90–F110, and I117–G137. Residue R140 coordinates a 1,2-diacyl-sn-glycero-3-phospho-(1'-sn-glycerol). 3 helical membrane passes run Q174 to I194, Y200 to F220, and G238 to I258.

It belongs to the Lgt family.

The protein localises to the cell inner membrane. It catalyses the reaction L-cysteinyl-[prolipoprotein] + a 1,2-diacyl-sn-glycero-3-phospho-(1'-sn-glycerol) = an S-1,2-diacyl-sn-glyceryl-L-cysteinyl-[prolipoprotein] + sn-glycerol 1-phosphate + H(+). Its pathway is protein modification; lipoprotein biosynthesis (diacylglyceryl transfer). In terms of biological role, catalyzes the transfer of the diacylglyceryl group from phosphatidylglycerol to the sulfhydryl group of the N-terminal cysteine of a prolipoprotein, the first step in the formation of mature lipoproteins. The sequence is that of Phosphatidylglycerol--prolipoprotein diacylglyceryl transferase from Francisella tularensis subsp. holarctica (strain FTNF002-00 / FTA).